The chain runs to 241 residues: Peroxisomal membrane protein 11C (241 aa).

At 1–122 (MALLNRLASA…ADAKVLRVDS (122 aa)) the chain is on the cytoplasmic side. The helical transmembrane segment at 123 to 149 (AWWWTLNTALWTLSLLLGAVKALWTML) threads the bilayer. At 150 to 211 (KLRQKLRSPT…GVLWAGRFPP (62 aa)) the chain is on the lumenal side. The helical transmembrane segment at 212–227 (WLVGLMGTISSILSTC) threads the bilayer. The Cytoplasmic portion of the chain corresponds to 228-241 (QAVRAGRQAEADSP).

Belongs to the peroxin-11 family. As to quaternary structure, homodimer. Heterodimer with either PEX11A or PEX11B. Interacts with FIS1. In terms of tissue distribution, expressed in liver and at much lower levels in heart, kidney and testis.

It is found in the peroxisome membrane. Functionally, promotes membrane protrusion and elongation on the peroxisomal surface. The chain is Peroxisomal membrane protein 11C (Pex11g) from Mus musculus (Mouse).